A 142-amino-acid polypeptide reads, in one-letter code: Transcription antitermination protein NusB (142 aa).

This sequence belongs to the NusB family.

In terms of biological role, involved in transcription antitermination. Required for transcription of ribosomal RNA (rRNA) genes. Binds specifically to the boxA antiterminator sequence of the ribosomal RNA (rrn) operons. The chain is Transcription antitermination protein NusB from Borreliella burgdorferi (strain ATCC 35210 / DSM 4680 / CIP 102532 / B31) (Borrelia burgdorferi).